The primary structure comprises 361 residues: Very-long-chain 3-oxoacyl-CoA reductase (361 aa).

The helical transmembrane segment at Pro32–Phe52 threads the bilayer. Val79, Asp133, Asn163, Arg198, Tyr236, Lys240, Val269, and Ser271 together coordinate NADP(+). Tyr236 serves as the catalytic Proton donor. Lys240 functions as the Lowers pKa of active site Tyr in the catalytic mechanism.

The protein belongs to the short-chain dehydrogenases/reductases (SDR) family.

It is found in the endoplasmic reticulum membrane. It catalyses the reaction a very-long-chain (3R)-3-hydroxyacyl-CoA + NADP(+) = a very-long-chain 3-oxoacyl-CoA + NADPH + H(+). The protein operates within lipid metabolism; fatty acid biosynthesis. In terms of biological role, component of the microsomal membrane bound fatty acid elongation system, which produces the 26-carbon very long-chain fatty acids (VLCFA) from palmitate. Catalyzes the reduction of the 3-ketoacyl-CoA intermediate that is formed in each cycle of fatty acid elongation. VLCFAs serve as precursors for ceramide and sphingolipids. The sequence is that of Very-long-chain 3-oxoacyl-CoA reductase from Cryptococcus neoformans var. neoformans serotype D (strain B-3501A) (Filobasidiella neoformans).